We begin with the raw amino-acid sequence, 257 residues long: Membrane protein insertase YidC 1 (257 aa).

Positions 1-20 are cleaved as a signal peptide; that stretch reads MYRKFGMAAMLVSILLLMTG. Cysteine 21 carries N-palmitoyl cysteine lipidation. Cysteine 21 carries S-diacylglycerol cysteine lipidation. The next 5 membrane-spanning stretches (helical) occupy residues 35–55, 59–79, 129–149, 160–180, and 205–225; these read IWDS…ANAF, FGLA…PLMI, LAGC…YHAI, FLWF…AGIT, and VMIL…WVIG.

It belongs to the OXA1/ALB3/YidC family. Type 2 subfamily.

Its subcellular location is the cell membrane. In terms of biological role, required for the insertion and/or proper folding and/or complex formation of integral membrane proteins into the membrane. Involved in integration of membrane proteins that insert both dependently and independently of the Sec translocase complex, as well as at least some lipoproteins. The chain is Membrane protein insertase YidC 1 from Halalkalibacterium halodurans (strain ATCC BAA-125 / DSM 18197 / FERM 7344 / JCM 9153 / C-125) (Bacillus halodurans).